Here is a 257-residue protein sequence, read N- to C-terminus: Gamma-secretase subunit APH-1B (257 aa).

7 helical membrane-spanning segments follow: residues 5-25 (VFFG…VFTI), 32-52 (VIFL…SSVF), 66-86 (PVQN…QELF), 115-135 (LLAY…SFVN), 160-180 (AFMT…FFDG), 186-206 (WYTL…TFLS), and 213-233 (LVTA…VAGG).

It belongs to the APH-1 family. As to quaternary structure, probable component of the gamma-secretase complex, a complex composed of a presenilin homodimer (PSEN1 or PSEN2), nicastrin (NCSTN), APH1 (APH1A or APH1B) and PEN2. Such minimal complex is sufficient for secretase activity, although other components may exist. Interacts with PSEN1 and PSEN2.

It is found in the membrane. In terms of biological role, probable subunit of the gamma-secretase complex, an endoprotease complex that catalyzes the intramembrane cleavage of integral proteins such as Notch receptors and APP (amyloid-beta precursor protein). It probably represents a stabilizing cofactor for the presenilin homodimer that promotes the formation of a stable complex. Probably present in a minority of gamma-secretase complexes compared to APH1A. The protein is Gamma-secretase subunit APH-1B (Aph1b) of Mus musculus (Mouse).